Reading from the N-terminus, the 187-residue chain is RNA 2',3'-cyclic phosphodiesterase (187 aa).

His40 acts as the Proton donor in catalysis. 2 short sequence motifs (HXTX) span residues 40 to 43 and 125 to 128; these read HLTL and HITI. The active-site Proton acceptor is the His125.

This sequence belongs to the 2H phosphoesterase superfamily. ThpR family.

It carries out the reaction a 3'-end 2',3'-cyclophospho-ribonucleotide-RNA + H2O = a 3'-end 2'-phospho-ribonucleotide-RNA + H(+). Hydrolyzes RNA 2',3'-cyclic phosphodiester to an RNA 2'-phosphomonoester. This is RNA 2',3'-cyclic phosphodiesterase from Thermotoga maritima (strain ATCC 43589 / DSM 3109 / JCM 10099 / NBRC 100826 / MSB8).